The primary structure comprises 172 residues: Transcriptional regulator TAC1 (172 aa).

The tract at residues Met-1–Ser-28 is disordered. The segment covering Asp-15–Ser-28 has biased composition (polar residues). The C2H2-type zinc-finger motif lies at Tyr-35–His-57. The short motif at Leu-156 to Leu-160 is the EAR-like (transcriptional repression) element.

Preferentially expressed in roots and flowers. Slightly expressed in leaves and stems.

It is found in the nucleus. Functionally, activation factor which mediates telomerase activity and potentiates responses to auxin through the regulation of BT2. Binds in vitro to the DNA sequence 5'-GACAGTGTTAC-3' of the BT2 promoter. The protein is Transcriptional regulator TAC1 (TAC1) of Arabidopsis thaliana (Mouse-ear cress).